We begin with the raw amino-acid sequence, 185 residues long: MKLIAGLGNPGGQYAETRHNAGFLLLDCLAEELKLDFRPKFQGLVAETMMGGEKVYLLKPQTFMNLSGRSIRELAQFYKIAPKDIMVVYDDMDLPIGRLRLRSSGSAGGHNGIKSTIAELGTEDFWRLKVGIGRPTAGWDSARYVLASFTKEELPVLEEILDKGIKAVTLWAKEGGDKAMNLYNR.

Tyrosine 14 provides a ligand contact to tRNA. Catalysis depends on histidine 19, which acts as the Proton acceptor. Phenylalanine 63, asparagine 65, and asparagine 111 together coordinate tRNA.

The protein belongs to the PTH family. In terms of assembly, monomer.

Its subcellular location is the cytoplasm. The enzyme catalyses an N-acyl-L-alpha-aminoacyl-tRNA + H2O = an N-acyl-L-amino acid + a tRNA + H(+). In terms of biological role, hydrolyzes ribosome-free peptidyl-tRNAs (with 1 or more amino acids incorporated), which drop off the ribosome during protein synthesis, or as a result of ribosome stalling. Functionally, catalyzes the release of premature peptidyl moieties from peptidyl-tRNA molecules trapped in stalled 50S ribosomal subunits, and thus maintains levels of free tRNAs and 50S ribosomes. The chain is Peptidyl-tRNA hydrolase from Desulfitobacterium hafniense (strain Y51).